The primary structure comprises 117 residues: Appetite-regulating hormone (117 aa).

Residues 1–23 (MPSPGTVCSLLLLGMLWLDLAMA) form the signal peptide. Ser-26 carries O-decanoyl serine; alternate lipidation. The O-hexanoyl serine; alternate moiety is linked to residue Ser-26. Ser-26 is lipidated: O-octanoyl serine; alternate. The interval 29–50 (SPEHQRVQQRKESKKPPAKLQP) is disordered. Residues 31-43 (EHQRVQQRKESKK) are compositionally biased toward basic and acidic residues. The propeptide at 52-75 (ALAGWLRPEDGGQAEGAEDELEVR) is removed in mature form. The residue at position 98 (Leu-98) is a Leucine amide. A propeptide spans 99–117 (GKFLQDILWEEAKEAPADK) (removed in mature form).

The protein belongs to the motilin family. Post-translationally, O-octanoylated by GOAT/MBOAT4. O-octanoylation or O-decanoylation is essential for ghrelin activity. The O-decanoylated forms Ghrelin-27-C10 and Ghrelin-28-C10 differ in the length of the carbon backbone of the carboxylic acid bound to Ser-26. A small fraction of ghrelin, ghrelin-28-C10:1, may be modified with a singly unsaturated carboxylic acid. Also O-acetylated and O-butyrylated on Ser-26 to minor levels. In terms of processing, amidation of Leu-98 is essential for obestatin activity. As to expression, highest level in stomach. All forms are found in serum as well. Other tissues compensate for the loss of ghrelin synthesis in the stomach following gastrectomy.

Its subcellular location is the secreted. In terms of biological role, ghrelin is the ligand for growth hormone secretagogue receptor type 1 (GHSR). Induces the release of growth hormone from the pituitary. Has an appetite-stimulating effect, induces adiposity and stimulates gastric acid secretion. Involved in growth regulation. May be the ligand for GPR39. May have an appetite-reducing effect resulting in decreased food intake. May reduce gastric emptying activity and jejunal motility. The protein is Appetite-regulating hormone (GHRL) of Homo sapiens (Human).